We begin with the raw amino-acid sequence, 144 residues long: UPF0299 membrane protein MS1271 (144 aa).

The next 4 helical transmembrane spans lie at I5–I25, L28–T48, V57–V77, and S92–G112.

It belongs to the UPF0299 family.

It localises to the cell inner membrane. The chain is UPF0299 membrane protein MS1271 from Mannheimia succiniciproducens (strain KCTC 0769BP / MBEL55E).